The following is a 138-amino-acid chain: Putative nickel-responsive regulator (138 aa).

The Ni(2+) site is built by H78, H89, H91, and C97.

It belongs to the transcriptional regulatory CopG/NikR family. Requires Ni(2+) as cofactor.

Its function is as follows. Transcriptional regulator. In Pyrococcus abyssi (strain GE5 / Orsay), this protein is Putative nickel-responsive regulator.